The primary structure comprises 242 residues: Polycomb group RING finger protein 3 (242 aa).

The RING-type zinc-finger motif lies at 17 to 56 (CRLCSGYLIDATTVTECLHTFCRSCLVKYLEENNTCPTCR). The segment at 115 to 149 (AKQHLDSHRNGETKADDSSNKEAAEEKPEEDNDYH) is disordered. Residues 117-140 (QHLDSHRNGETKADDSSNKEAAEE) are compositionally biased toward basic and acidic residues. Residues 132 to 242 (SSNKEAAEEK…LHYRPKMDLL (111 aa)) form an interaction with BCORL1 region.

As to quaternary structure, component of a PRC1-like complex that contains PCGF3, RNF2 and RYBP. Interacts with CBX6, CBX7 and CBX8. Interacts with BCORL1.

The protein localises to the nucleus. It localises to the nucleoplasm. Functionally, component of a Polycomb group (PcG) multiprotein PRC1-like complex, a complex class required to maintain the transcriptionally repressive state of many genes, including Hox genes, throughout development. PcG PRC1 complex acts via chromatin remodeling and modification of histones; it mediates monoubiquitination of histone H2A 'Lys-119', rendering chromatin heritably changed in its expressibility. Within the PRC1-like complex, regulates RNF2 ubiquitin ligase activity. Plays a redundant role with PCGF5 as part of a PRC1-like complex that mediates monoubiquitination of histone H2A 'Lys-119' on the X chromosome and is required for normal silencing of one copy of the X chromosome in XX females. This is Polycomb group RING finger protein 3 (PCGF3) from Homo sapiens (Human).